We begin with the raw amino-acid sequence, 120 residues long: UPF0231 protein YacL (120 aa).

The protein belongs to the UPF0231 family.

In Escherichia coli O139:H28 (strain E24377A / ETEC), this protein is UPF0231 protein YacL.